Here is a 218-residue protein sequence, read N- to C-terminus: Large ribosomal subunit protein uL3 (218 aa).

Belongs to the universal ribosomal protein uL3 family. In terms of assembly, part of the 50S ribosomal subunit. Forms a cluster with proteins L14 and L19.

One of the primary rRNA binding proteins, it binds directly near the 3'-end of the 23S rRNA, where it nucleates assembly of the 50S subunit. The protein is Large ribosomal subunit protein uL3 of Syntrophus aciditrophicus (strain SB).